Here is a 293-residue protein sequence, read N- to C-terminus: Elongation factor Ts (293 aa).

The interval 79-82 is involved in Mg(2+) ion dislocation from EF-Tu; the sequence is TDFV.

It belongs to the EF-Ts family.

It is found in the cytoplasm. Associates with the EF-Tu.GDP complex and induces the exchange of GDP to GTP. It remains bound to the aminoacyl-tRNA.EF-Tu.GTP complex up to the GTP hydrolysis stage on the ribosome. This Exiguobacterium sibiricum (strain DSM 17290 / CCUG 55495 / CIP 109462 / JCM 13490 / 255-15) protein is Elongation factor Ts.